The primary structure comprises 261 residues: NAD-capped RNA hydrolase NudC (261 aa).

Arg-69 provides a ligand contact to substrate. Cys-98 and Cys-101 together coordinate Zn(2+). Glu-111 contributes to the substrate binding site. 2 residues coordinate Zn(2+): Cys-116 and Cys-119. Residue Tyr-124 participates in substrate binding. Positions 125 to 248 (PQIAPCIIVA…TVARRLIEDT (124 aa)) constitute a Nudix hydrolase domain. 3 residues coordinate a divalent metal cation: Ala-158, Glu-174, and Glu-178. The short motif at 159–180 (GFVEVGETLEQTVAREVMEESS) is the Nudix box element. Position 192-199 (192-199 (QPWPFPQS)) interacts with substrate. Glu-219 is an a divalent metal cation binding site. Ala-241 is a binding site for substrate.

It belongs to the Nudix hydrolase family. NudC subfamily. Homodimer. Requires Mg(2+) as cofactor. Mn(2+) serves as cofactor. Zn(2+) is required as a cofactor.

The catalysed reaction is a 5'-end NAD(+)-phospho-ribonucleoside in mRNA + H2O = a 5'-end phospho-adenosine-phospho-ribonucleoside in mRNA + beta-nicotinamide D-ribonucleotide + 2 H(+). It carries out the reaction NAD(+) + H2O = beta-nicotinamide D-ribonucleotide + AMP + 2 H(+). It catalyses the reaction NADH + H2O = reduced beta-nicotinamide D-ribonucleotide + AMP + 2 H(+). In terms of biological role, mRNA decapping enzyme that specifically removes the nicotinamide adenine dinucleotide (NAD) cap from a subset of mRNAs by hydrolyzing the diphosphate linkage to produce nicotinamide mononucleotide (NMN) and 5' monophosphate mRNA. The NAD-cap is present at the 5'-end of some mRNAs and stabilizes RNA against 5'-processing. Has preference for mRNAs with a 5'-end purine. Catalyzes the hydrolysis of a broad range of dinucleotide pyrophosphates. This is NAD-capped RNA hydrolase NudC from Erwinia tasmaniensis (strain DSM 17950 / CFBP 7177 / CIP 109463 / NCPPB 4357 / Et1/99).